Consider the following 126-residue polypeptide: Small ribosomal subunit protein uS8 (126 aa).

Belongs to the universal ribosomal protein uS8 family. In terms of assembly, part of the 30S ribosomal subunit. Contacts proteins S5 and S12.

One of the primary rRNA binding proteins, it binds directly to 16S rRNA central domain where it helps coordinate assembly of the platform of the 30S subunit. This Nitratidesulfovibrio vulgaris (strain DSM 19637 / Miyazaki F) (Desulfovibrio vulgaris) protein is Small ribosomal subunit protein uS8.